A 203-amino-acid chain; its full sequence is Small ribosomal subunit protein uS4 (203 aa).

A disordered region spans residues Leu-20 to Ser-45. The S4 RNA-binding domain occupies Met-92 to Ala-155.

Belongs to the universal ribosomal protein uS4 family. Part of the 30S ribosomal subunit. Contacts protein S5. The interaction surface between S4 and S5 is involved in control of translational fidelity.

In terms of biological role, one of the primary rRNA binding proteins, it binds directly to 16S rRNA where it nucleates assembly of the body of the 30S subunit. With S5 and S12 plays an important role in translational accuracy. The chain is Small ribosomal subunit protein uS4 from Synechococcus sp. (strain JA-3-3Ab) (Cyanobacteria bacterium Yellowstone A-Prime).